Here is a 101-residue protein sequence, read N- to C-terminus: Stefin-C (101 aa).

The residue at position 1 (M1) is an N-acetylmethionine. The Secondary area of contact motif lies at 49–53 (QVVAG).

This sequence belongs to the cystatin family.

The protein resides in the cytoplasm. Its function is as follows. Strong inhibitor of papain and cathepsin L but poor inhibitor of cathepsin B. This is Stefin-C from Bos taurus (Bovine).